The sequence spans 369 residues: Allantoicase (369 aa).

The interval 341–369 (PDSKNNNNNNNNNNNNNTSNSFKTSDRQQ) is disordered. Over residues 345-357 (NNNNNNNNNNNNN) the composition is skewed to low complexity.

The protein belongs to the allantoicase family.

It carries out the reaction allantoate + H2O = (S)-ureidoglycolate + urea. It functions in the pathway nitrogen metabolism; (S)-allantoin degradation; (S)-ureidoglycolate from allantoate (aminidohydrolase route): step 1/1. Its function is as follows. Utilization of purines as secondary nitrogen sources, when primary sources are limiting. The chain is Allantoicase (allC) from Dictyostelium discoideum (Social amoeba).